A 127-amino-acid chain; its full sequence is Large ribosomal subunit protein eL22x (127 aa).

It belongs to the eukaryotic ribosomal protein eL22 family.

This Arabidopsis thaliana (Mouse-ear cress) protein is Large ribosomal subunit protein eL22x (RPL22A).